A 97-amino-acid polypeptide reads, in one-letter code: Thiosulfate sulfurtransferase/rhodanese-like domain-containing protein 3 (97 aa).

In terms of domain architecture, Rhodanese spans 32-84 (YKELKNLLNSKNIMLIDVREIWEILEYQKIPESINVPLDEVGEALQMNPRDFK). N6-succinyllysine is present on Lys-84.

This chain is Thiosulfate sulfurtransferase/rhodanese-like domain-containing protein 3 (TSTD3), found in Homo sapiens (Human).